Reading from the N-terminus, the 420-residue chain is L-rhamnose isomerase (420 aa).

His-264, Asp-296, and Asp-298 together coordinate Mn(2+).

Belongs to the rhamnose isomerase family. Mn(2+) is required as a cofactor.

It localises to the cytoplasm. It carries out the reaction L-rhamnopyranose = L-rhamnulose. It participates in carbohydrate degradation; L-rhamnose degradation; glycerone phosphate from L-rhamnose: step 1/3. Functionally, catalyzes the interconversion of L-rhamnose and L-rhamnulose. The sequence is that of L-rhamnose isomerase from Listeria monocytogenes serotype 4b (strain CLIP80459).